The primary structure comprises 205 residues: N-(5'-phosphoribosyl)anthranilate isomerase (205 aa).

Belongs to the TrpF family.

It catalyses the reaction N-(5-phospho-beta-D-ribosyl)anthranilate = 1-(2-carboxyphenylamino)-1-deoxy-D-ribulose 5-phosphate. It functions in the pathway amino-acid biosynthesis; L-tryptophan biosynthesis; L-tryptophan from chorismate: step 3/5. The sequence is that of N-(5'-phosphoribosyl)anthranilate isomerase from Trichlorobacter lovleyi (strain ATCC BAA-1151 / DSM 17278 / SZ) (Geobacter lovleyi).